Reading from the N-terminus, the 337-residue chain is Fructose-1,6-bisphosphatase class 1 (337 aa).

Residues Glu94, Asp116, Leu118, and Asp119 each coordinate Mg(2+). Substrate is bound by residues 119-122 (DGSS), Asn210, and Lys276. Position 282 (Glu282) interacts with Mg(2+).

The protein belongs to the FBPase class 1 family. In terms of assembly, homotetramer. Mg(2+) is required as a cofactor.

Its subcellular location is the cytoplasm. The catalysed reaction is beta-D-fructose 1,6-bisphosphate + H2O = beta-D-fructose 6-phosphate + phosphate. The protein operates within carbohydrate biosynthesis; gluconeogenesis. The protein is Fructose-1,6-bisphosphatase class 1 of Burkholderia multivorans (strain ATCC 17616 / 249).